A 254-amino-acid polypeptide reads, in one-letter code: MQNAGIAFDSLEQLNAARQLACRLGLPLLTPPLNLGRPTITLVLSAQRLELHHPELGAPLFVDFVKGAMGYRRRQGEGRKQPLARAIGLKGNVCPDVLDATAGLGRDAFVLAMLGCPVRLIEQSPVIGALLEDGLARARKTPETAPIIAQMTLMQANAVDWMGTLNAQDFPDVVYLDPMYPERTKSALVKKEMRLLRILAGKDENAPLLLEVALECARQRVVVKRPRPGVFLAGVKPDFSIESKTTRFDIYLTH.

Residues 106 to 107 (RD) and aspartate 177 each bind S-adenosyl-L-methionine.

Belongs to the methyltransferase superfamily. RsmJ family.

It is found in the cytoplasm. It carries out the reaction guanosine(1516) in 16S rRNA + S-adenosyl-L-methionine = N(2)-methylguanosine(1516) in 16S rRNA + S-adenosyl-L-homocysteine + H(+). Functionally, specifically methylates the guanosine in position 1516 of 16S rRNA. This is Ribosomal RNA small subunit methyltransferase J from Nitrosococcus oceani (strain ATCC 19707 / BCRC 17464 / JCM 30415 / NCIMB 11848 / C-107).